The sequence spans 709 residues: Elongation factor G (709 aa).

In terms of domain architecture, tr-type G spans 9 to 296 (AKVRNIGIMA…AVVRYLPSPL (288 aa)). Residues 18 to 25 (AHIDAGKT), 86 to 90 (DTPGH), and 140 to 143 (NKLD) each bind GTP.

This sequence belongs to the TRAFAC class translation factor GTPase superfamily. Classic translation factor GTPase family. EF-G/EF-2 subfamily.

The protein resides in the cytoplasm. In terms of biological role, catalyzes the GTP-dependent ribosomal translocation step during translation elongation. During this step, the ribosome changes from the pre-translocational (PRE) to the post-translocational (POST) state as the newly formed A-site-bound peptidyl-tRNA and P-site-bound deacylated tRNA move to the P and E sites, respectively. Catalyzes the coordinated movement of the two tRNA molecules, the mRNA and conformational changes in the ribosome. The sequence is that of Elongation factor G from Streptomyces griseus subsp. griseus (strain JCM 4626 / CBS 651.72 / NBRC 13350 / KCC S-0626 / ISP 5235).